Here is a 300-residue protein sequence, read N- to C-terminus: Lysenin-related protein 2 (300 aa).

The tract at residues 12–35 is N-terminal cap domain; the sequence is EQIEVDVVAVWKEGYVYENRGSTS. A beta-hairpin domain region spans residues 36–109; that stretch reads VEQKIKITKG…SKEIEHTITI (74 aa). The tract at residues 110–158 is N-terminal cap domain; that stretch reads PPTSKFTRWQLNADVGGADIEYMYLIDEVTPIGGTLSIPQVIKSRAKIL. The tract at residues 159 to 299 is C-terminal receptor-binding domain; the sequence is VGREIYLGET…EDKWILEVVK (141 aa). 4 residues coordinate an N-(acyl)-sphingosylphosphocholine: K187, S229, Y235, and Y284. Residues C274 and C285 are joined by a disulfide bond.

Belongs to the lysenin family. Binds to sphingomyelin as a monomer by using its C-terminal domain. Forms a nonamer when sphingomyelin/LRP-2 ratio is lower than ca 500. Oligomerization, but not binding, is influenced by the fluidity of sphingomyelin. In terms of tissue distribution, expressed by coelomocytes.

The protein resides in the secreted. The protein localises to the target cell membrane. Pore-forming toxin that specifically binds sphingomyelin in the plasma membrane of various cells. Has hemolytic activity. It also has antibacterial activities against B.megaterium. This is Lysenin-related protein 2 from Eisenia fetida (Red wiggler worm).